We begin with the raw amino-acid sequence, 136 residues long: Large ribosomal subunit protein uL22 (136 aa).

It belongs to the universal ribosomal protein uL22 family. Part of the 50S ribosomal subunit.

Its function is as follows. This protein binds specifically to 23S rRNA; its binding is stimulated by other ribosomal proteins, e.g. L4, L17, and L20. It is important during the early stages of 50S assembly. It makes multiple contacts with different domains of the 23S rRNA in the assembled 50S subunit and ribosome. Functionally, the globular domain of the protein is located near the polypeptide exit tunnel on the outside of the subunit, while an extended beta-hairpin is found that lines the wall of the exit tunnel in the center of the 70S ribosome. The sequence is that of Large ribosomal subunit protein uL22 from Bacteroides fragilis (strain YCH46).